Reading from the N-terminus, the 943-residue chain is Aconitate hydratase A (943 aa).

Positions 479, 545, and 548 each coordinate [4Fe-4S] cluster.

The protein belongs to the aconitase/IPM isomerase family. Monomer. Requires [4Fe-4S] cluster as cofactor.

The catalysed reaction is citrate = D-threo-isocitrate. It carries out the reaction (2S,3R)-3-hydroxybutane-1,2,3-tricarboxylate = 2-methyl-cis-aconitate + H2O. It participates in carbohydrate metabolism; tricarboxylic acid cycle; isocitrate from oxaloacetate: step 2/2. It functions in the pathway organic acid metabolism; propanoate degradation. Functionally, involved in the catabolism of short chain fatty acids (SCFA) via the tricarboxylic acid (TCA)(acetyl degradation route) and probably via the 2-methylcitrate cycle I (propionate degradation route). Catalyzes the reversible isomerization of citrate to isocitrate via cis-aconitate. The apo form of AcnA functions as a RNA-binding regulatory protein which binds to selected IRE-like sequences present within the UTRs (untranslated regions) of 3' trxC and 5' IdeR mRNA. Could catalyze the hydration of 2-methyl-cis-aconitate to yield (2R,3S)-2-methylisocitrate. In Mycobacterium tuberculosis (strain ATCC 25618 / H37Rv), this protein is Aconitate hydratase A (acn).